We begin with the raw amino-acid sequence, 78 residues long: RNA-binding protein Hfq (78 aa).

Positions 10–69 constitute a Sm domain; that stretch reads DPFLNTLRKEHVPVSIYLVNGIKLQGQIESFDQYVVLLRNTVTQMVYKHAISTVVPARAV.

Belongs to the Hfq family. In terms of assembly, homohexamer.

Its function is as follows. RNA chaperone that binds small regulatory RNA (sRNAs) and mRNAs to facilitate mRNA translational regulation in response to envelope stress, environmental stress and changes in metabolite concentrations. Also binds with high specificity to tRNAs. The protein is RNA-binding protein Hfq of Bordetella bronchiseptica (strain ATCC BAA-588 / NCTC 13252 / RB50) (Alcaligenes bronchisepticus).